The sequence spans 212 residues: Probable nicotinate-nucleotide adenylyltransferase (212 aa).

The protein belongs to the NadD family.

The catalysed reaction is nicotinate beta-D-ribonucleotide + ATP + H(+) = deamido-NAD(+) + diphosphate. It participates in cofactor biosynthesis; NAD(+) biosynthesis; deamido-NAD(+) from nicotinate D-ribonucleotide: step 1/1. Its function is as follows. Catalyzes the reversible adenylation of nicotinate mononucleotide (NaMN) to nicotinic acid adenine dinucleotide (NaAD). This chain is Probable nicotinate-nucleotide adenylyltransferase, found in Mycobacterium avium (strain 104).